Consider the following 453-residue polypeptide: Tyrosine-protein phosphatase non-receptor type 18 (453 aa).

One can recognise a Tyrosine-protein phosphatase domain in the interval 26–291 (LAREFSDIKA…RFLYHTVAQL (266 aa)). Residues aspartate 197, 229 to 235 (CSAGCGR), and glutamine 276 each bind substrate. Residue cysteine 229 is the Phosphocysteine intermediate of the active site. A phosphotyrosine mark is found at tyrosine 381 and tyrosine 419. The segment at 384 to 453 (VAPRAQRPVA…RDPPAEWTRV (70 aa)) is disordered. Residues 442 to 453 (GPRDPPAEWTRV) are compositionally biased toward basic and acidic residues.

It belongs to the protein-tyrosine phosphatase family. Non-receptor class 4 subfamily. As to quaternary structure, interacts with PSTPIP1. In terms of tissue distribution, highest expression in bone marrow. Also expressed in kidney, lung, ovary, spleen, thymus and lymph node.

Its subcellular location is the nucleus. The protein localises to the cytoplasm. The catalysed reaction is O-phospho-L-tyrosyl-[protein] + H2O = L-tyrosyl-[protein] + phosphate. Its function is as follows. May be involved in growth and differentiation of hematopoietic cells. The chain is Tyrosine-protein phosphatase non-receptor type 18 (Ptpn18) from Mus musculus (Mouse).